Here is a 426-residue protein sequence, read N- to C-terminus: Enolase (426 aa).

Residue Gln-163 coordinates (2R)-2-phosphoglycerate. The active-site Proton donor is the Glu-205. Mg(2+)-binding residues include Asp-242, Glu-286, and Asp-313. The (2R)-2-phosphoglycerate site is built by Lys-338, Arg-367, Ser-368, and Lys-389. The Proton acceptor role is filled by Lys-338.

This sequence belongs to the enolase family. Requires Mg(2+) as cofactor.

It localises to the cytoplasm. The protein resides in the secreted. The protein localises to the cell surface. The catalysed reaction is (2R)-2-phosphoglycerate = phosphoenolpyruvate + H2O. Its pathway is carbohydrate degradation; glycolysis; pyruvate from D-glyceraldehyde 3-phosphate: step 4/5. Catalyzes the reversible conversion of 2-phosphoglycerate (2-PG) into phosphoenolpyruvate (PEP). It is essential for the degradation of carbohydrates via glycolysis. The sequence is that of Enolase from Helicobacter pylori (strain ATCC 700392 / 26695) (Campylobacter pylori).